We begin with the raw amino-acid sequence, 130 residues long: MVLLDPLANALSTIKNAEAIGKSSCIIRPASKNIGNVLKVMQDLGYIGEFEFIDDGKAGIYSVTLVGRVNKCGAIKPRYSVGTGSFERWEKQFLPAKNFGALIITTSSGVMSQYEAREKKIGGQLLAYVY.

The protein belongs to the universal ribosomal protein uS8 family. As to quaternary structure, part of the 30S ribosomal subunit.

In terms of biological role, one of the primary rRNA binding proteins, it binds directly to 16S rRNA central domain where it helps coordinate assembly of the platform of the 30S subunit. The protein is Small ribosomal subunit protein uS8 of Methanosarcina barkeri (strain Fusaro / DSM 804).